We begin with the raw amino-acid sequence, 352 residues long: Holliday junction branch migration complex subunit RuvB (352 aa).

The large ATPase domain (RuvB-L) stretch occupies residues 5–191; it reads TDDFSEQRVI…FGIVARLEFY (187 aa). Residues leucine 30, arginine 31, glycine 72, lysine 75, threonine 76, threonine 77, 138-140, arginine 181, tyrosine 191, and arginine 228 each bind ATP; that span reads EDY. Threonine 76 contacts Mg(2+). A small ATPAse domain (RuvB-S) region spans residues 192–262; the sequence is TPLELTRIVT…MADAALVMLD (71 aa). The head domain (RuvB-H) stretch occupies residues 265–352; sequence PVGFDVMDRK…GPNGELWGGQ (88 aa). DNA is bound by residues arginine 301, arginine 320, and arginine 325.

This sequence belongs to the RuvB family. In terms of assembly, homohexamer. Forms an RuvA(8)-RuvB(12)-Holliday junction (HJ) complex. HJ DNA is sandwiched between 2 RuvA tetramers; dsDNA enters through RuvA and exits via RuvB. An RuvB hexamer assembles on each DNA strand where it exits the tetramer. Each RuvB hexamer is contacted by two RuvA subunits (via domain III) on 2 adjacent RuvB subunits; this complex drives branch migration. In the full resolvosome a probable DNA-RuvA(4)-RuvB(12)-RuvC(2) complex forms which resolves the HJ.

The protein localises to the cytoplasm. The catalysed reaction is ATP + H2O = ADP + phosphate + H(+). The RuvA-RuvB-RuvC complex processes Holliday junction (HJ) DNA during genetic recombination and DNA repair, while the RuvA-RuvB complex plays an important role in the rescue of blocked DNA replication forks via replication fork reversal (RFR). RuvA specifically binds to HJ cruciform DNA, conferring on it an open structure. The RuvB hexamer acts as an ATP-dependent pump, pulling dsDNA into and through the RuvAB complex. RuvB forms 2 homohexamers on either side of HJ DNA bound by 1 or 2 RuvA tetramers; 4 subunits per hexamer contact DNA at a time. Coordinated motions by a converter formed by DNA-disengaged RuvB subunits stimulates ATP hydrolysis and nucleotide exchange. Immobilization of the converter enables RuvB to convert the ATP-contained energy into a lever motion, pulling 2 nucleotides of DNA out of the RuvA tetramer per ATP hydrolyzed, thus driving DNA branch migration. The RuvB motors rotate together with the DNA substrate, which together with the progressing nucleotide cycle form the mechanistic basis for DNA recombination by continuous HJ branch migration. Branch migration allows RuvC to scan DNA until it finds its consensus sequence, where it cleaves and resolves cruciform DNA. This chain is Holliday junction branch migration complex subunit RuvB, found in Herminiimonas arsenicoxydans.